The primary structure comprises 221 residues: Large ribosomal subunit protein uL4 (221 aa).

Residues 56–83 form a disordered region; sequence HATKTRGMVSGGGRKPWKQKGTGRARQG.

Belongs to the universal ribosomal protein uL4 family. In terms of assembly, part of the 50S ribosomal subunit.

In terms of biological role, one of the primary rRNA binding proteins, this protein initially binds near the 5'-end of the 23S rRNA. It is important during the early stages of 50S assembly. It makes multiple contacts with different domains of the 23S rRNA in the assembled 50S subunit and ribosome. Functionally, forms part of the polypeptide exit tunnel. This is Large ribosomal subunit protein uL4 from Bifidobacterium adolescentis (strain ATCC 15703 / DSM 20083 / NCTC 11814 / E194a).